Reading from the N-terminus, the 228-residue chain is Cytochrome c oxidase subunit 2 (228 aa).

The Mitochondrial intermembrane segment spans residues 1-26 (MATWANLGLQDSSSPLMEQLNFFHDH). The chain crosses the membrane as a helical span at residues 27–47 (TLLILTMITILVGYIMGMLMF). Residues 48 to 60 (NQFTNRYLLHGQT) lie on the Mitochondrial matrix side of the membrane. A helical membrane pass occupies residues 61–81 (IEIIWTVLPAIILMFIALPSL). The Mitochondrial intermembrane segment spans residues 82–228 (RLLYLMDEIN…FIKWITNMTN (147 aa)). Cu cation is bound by residues His-161, Cys-196, Glu-198, Cys-200, His-204, and Met-207. Glu-198 contributes to the Mg(2+) binding site.

The protein belongs to the cytochrome c oxidase subunit 2 family. As to quaternary structure, component of the cytochrome c oxidase (complex IV, CIV), a multisubunit enzyme composed of a catalytic core of 3 subunits and several supernumerary subunits. The complex exists as a monomer or a dimer and forms supercomplexes (SCs) in the inner mitochondrial membrane with ubiquinol-cytochrome c oxidoreductase (cytochrome b-c1 complex, complex III, CIII). It depends on Cu cation as a cofactor.

Its subcellular location is the mitochondrion inner membrane. It catalyses the reaction 4 Fe(II)-[cytochrome c] + O2 + 8 H(+)(in) = 4 Fe(III)-[cytochrome c] + 2 H2O + 4 H(+)(out). In terms of biological role, component of the cytochrome c oxidase, the last enzyme in the mitochondrial electron transport chain which drives oxidative phosphorylation. The respiratory chain contains 3 multisubunit complexes succinate dehydrogenase (complex II, CII), ubiquinol-cytochrome c oxidoreductase (cytochrome b-c1 complex, complex III, CIII) and cytochrome c oxidase (complex IV, CIV), that cooperate to transfer electrons derived from NADH and succinate to molecular oxygen, creating an electrochemical gradient over the inner membrane that drives transmembrane transport and the ATP synthase. Cytochrome c oxidase is the component of the respiratory chain that catalyzes the reduction of oxygen to water. Electrons originating from reduced cytochrome c in the intermembrane space (IMS) are transferred via the dinuclear copper A center (CU(A)) of subunit 2 and heme A of subunit 1 to the active site in subunit 1, a binuclear center (BNC) formed by heme A3 and copper B (CU(B)). The BNC reduces molecular oxygen to 2 water molecules using 4 electrons from cytochrome c in the IMS and 4 protons from the mitochondrial matrix. The chain is Cytochrome c oxidase subunit 2 (COXII) from Anopheles quadrimaculatus (Common malaria mosquito).